Reading from the N-terminus, the 376-residue chain is Probable allantoicase (376 aa).

The protein belongs to the allantoicase family.

It carries out the reaction allantoate + H2O = (S)-ureidoglycolate + urea. Its pathway is nitrogen metabolism; (S)-allantoin degradation; (S)-ureidoglycolate from allantoate (aminidohydrolase route): step 1/1. The polypeptide is Probable allantoicase (Streptomyces coelicolor (strain ATCC BAA-471 / A3(2) / M145)).